The sequence spans 397 residues: Acetate kinase (397 aa).

Mg(2+) is bound at residue Asn8. An ATP-binding site is contributed by Lys15. Residue Arg89 participates in substrate binding. The Proton donor/acceptor role is filled by Asp146. Residues 206–210 (HVGNG), 283–285 (DMR), and 331–335 (GIGEN) contribute to the ATP site. Glu383 provides a ligand contact to Mg(2+).

It belongs to the acetokinase family. In terms of assembly, homodimer. The cofactor is Mg(2+). Mn(2+) is required as a cofactor.

Its subcellular location is the cytoplasm. The catalysed reaction is acetate + ATP = acetyl phosphate + ADP. The protein operates within metabolic intermediate biosynthesis; acetyl-CoA biosynthesis; acetyl-CoA from acetate: step 1/2. Catalyzes the formation of acetyl phosphate from acetate and ATP. Can also catalyze the reverse reaction. The protein is Acetate kinase of Streptococcus thermophilus (strain ATCC BAA-491 / LMD-9).